The sequence spans 246 residues: Homeobox protein Crxos (246 aa).

2 consecutive DNA-binding regions (homeobox) follow at residues 22 to 72 (WEQL…EMRP) and 129 to 182 (ELTD…RGYR). A Nuclear localization signal motif is present at residues 163 to 177 (RKDLIRSWFITQRHR).

This sequence belongs to the paired homeobox family. Specifically expressed during the preimplantation stages of embryonic development, between the four-cell to eight-cell stage and the morula stage. Expressed in adult testis. In terms of tissue distribution, detected in early embryos; expression decreases gradually with embryonic development. Also expressed in extraembryonic tissues after E14.5, expression level increases drastically until E18.5, immediately before partum.

The protein localises to the nucleus. Its function is as follows. Transcription factor that acts as a regulator of embryonic stem cell differentiation during the preimplantation stages of embryonic development. Functionally, transcription factor that acts as a positive regulator of embryonic stem cell differentiation. Transcription factor that promotes embryonic stem cell pluripotency. In terms of biological role, transcription factor that promotes embryonic stem cell pluripotency. Also involved in extraembryonic tissues development by promoting the expression of placental prolactin family genes. In Mus musculus (Mouse), this protein is Homeobox protein Crxos.